We begin with the raw amino-acid sequence, 147 residues long: Large ribosomal subunit protein uL15 (147 aa).

The span at 1-28 shows a compositional bias: basic residues; it reads MIRRRKKVRKLRGSHTHGWGCKKKHRGG. Positions 1–43 are disordered; sequence MIRRRKKVRKLRGSHTHGWGCKKKHRGGGSKGGRGMAGTGKRN. Residues 29-38 are compositionally biased toward gly residues; it reads GSKGGRGMAG.

This sequence belongs to the universal ribosomal protein uL15 family. In terms of assembly, part of the 50S ribosomal subunit.

In terms of biological role, binds to the 23S rRNA. This chain is Large ribosomal subunit protein uL15, found in Pyrococcus horikoshii (strain ATCC 700860 / DSM 12428 / JCM 9974 / NBRC 100139 / OT-3).